The primary structure comprises 448 residues: Trigger factor (448 aa).

The PPIase FKBP-type domain maps to 167-253; the sequence is GSIVRVDFVE…VKDIKRRDIP (87 aa).

Belongs to the FKBP-type PPIase family. Tig subfamily.

It localises to the cytoplasm. The enzyme catalyses [protein]-peptidylproline (omega=180) = [protein]-peptidylproline (omega=0). Its function is as follows. Involved in protein export. Acts as a chaperone by maintaining the newly synthesized protein in an open conformation. Functions as a peptidyl-prolyl cis-trans isomerase. This chain is Trigger factor, found in Borrelia recurrentis (strain A1).